A 388-amino-acid chain; its full sequence is Na(+)/H(+) antiporter NhaA (388 aa).

Over 1–11 (MKHLHRFFSSD) the chain is Cytoplasmic. A helical membrane pass occupies residues 12 to 31 (ASGGIILIIAAILAMMMANS). Residues 32–58 (GATSGWYHDFLETPVQLRVGSLEINKN) are Periplasmic-facing. The chain crosses the membrane as a helical span at residues 59–80 (MLLWINDALMAVFFLLVGLEVK). Residues 81–96 (RELMQGSLASLRQAAF) are Cytoplasmic-facing. Residues 97 to 116 (PVIAAIGGMIVPALLYLAFN) traverse the membrane as a helical segment. Over 117–122 (YADPIT) the chain is Periplasmic. A helical transmembrane segment spans residues 123-130 (REGWAIPA). At 131–154 (ATDIAFALGVLALLGSRVPLALKI) the chain is on the cytoplasmic side. A helical membrane pass occupies residues 155–176 (FLMALAIIDDLGAIIIIALFYT). Residues 177-180 (NDLS) lie on the Periplasmic side of the membrane. Residues 181-200 (MASLGVAAVAIAVLAVLNLC) form a helical membrane-spanning segment. Topologically, residues 201-204 (GVRR) are cytoplasmic. A helical transmembrane segment spans residues 205–222 (TGVYILVGVVLWTAVLKS). Residue glycine 223 is a topological domain, periplasmic. A helical membrane pass occupies residues 224–236 (VHATLAGVIVGFF). Residues 237-253 (IPLKEKHGRSTAKRLEH) are Cytoplasmic-facing. Residues 254-272 (VLHPWVAYLILPLFAFANA) traverse the membrane as a helical segment. The Periplasmic portion of the chain corresponds to 273–286 (GVSLQGVTLDGLTS). The chain crosses the membrane as a helical span at residues 287 to 310 (ILPLGIIAGLLIGKPLGISLFCWL). The Cytoplasmic segment spans residues 311–339 (ALRLKLAHLPEGTTYQQIMAVGILCGIGF). A helical transmembrane segment spans residues 340–350 (TMSIFIASLAF). Residues 351–357 (GSVDPEL) lie on the Periplasmic side of the membrane. A helical membrane pass occupies residues 358-380 (INWAKLGILVGSISSAVIGYSWL). The Cytoplasmic segment spans residues 381–388 (RVRLRPSV).

Belongs to the NhaA Na(+)/H(+) (TC 2.A.33) antiporter family.

Its subcellular location is the cell inner membrane. It carries out the reaction Na(+)(in) + 2 H(+)(out) = Na(+)(out) + 2 H(+)(in). Its function is as follows. Na(+)/H(+) antiporter that extrudes sodium in exchange for external protons. The chain is Na(+)/H(+) antiporter NhaA from Shigella dysenteriae serotype 1 (strain Sd197).